A 562-amino-acid chain; its full sequence is ATP synthase subunit beta, mitochondrial (562 aa).

Composition is skewed to low complexity over residues 1 to 13 (MASR…LLRS) and 20 to 40 (SKSP…SSKS). 2 disordered regions span residues 1–43 (MASR…SRAS) and 58–83 (SAAA…KITD). A mitochondrion-targeting transit peptide spans 1-55 (MASRRLLSSLLRSSSRRSVSKSPISNINPKLSSSSPSSKSRASPYGYLLTRAAEY). 237-244 (GGAGVGKT) contacts ATP.

The protein belongs to the ATPase alpha/beta chains family. As to quaternary structure, F-type ATPases have 2 components, CF(1) - the catalytic core - and CF(0) - the membrane proton channel. CF(1) has five subunits: alpha(3), beta(3), gamma(1), delta(1), epsilon(1). CF(0) has three main subunits: a, b and c.

Its subcellular location is the mitochondrion. It is found in the mitochondrion inner membrane. The enzyme catalyses ATP + H2O + 4 H(+)(in) = ADP + phosphate + 5 H(+)(out). Functionally, mitochondrial membrane ATP synthase (F(1)F(0) ATP synthase or Complex V) produces ATP from ADP in the presence of a proton gradient across the membrane which is generated by electron transport complexes of the respiratory chain. F-type ATPases consist of two structural domains, F(1) - containing the extramembraneous catalytic core, and F(0) - containing the membrane proton channel, linked together by a central stalk and a peripheral stalk. During catalysis, ATP synthesis in the catalytic domain of F(1) is coupled via a rotary mechanism of the central stalk subunits to proton translocation. Subunits alpha and beta form the catalytic core in F(1). Rotation of the central stalk against the surrounding alpha(3)beta(3) subunits leads to hydrolysis of ATP in three separate catalytic sites on the beta subunits. This is ATP synthase subunit beta, mitochondrial (ATPB) from Hevea brasiliensis (Para rubber tree).